The primary structure comprises 340 residues: GTP 3',8-cyclase (340 aa).

One can recognise a Radical SAM core domain in the interval 8 to 230 (KLGRPIRDLR…EQHFEIDPVE (223 aa)). Arg17 is a binding site for GTP. [4Fe-4S] cluster is bound by residues Cys24 and Cys28. Tyr30 provides a ligand contact to S-adenosyl-L-methionine. Cys31 contacts [4Fe-4S] cluster. Arg71 contributes to the GTP binding site. Residue Gly75 coordinates S-adenosyl-L-methionine. Residue Thr102 coordinates GTP. Residue Ser126 participates in S-adenosyl-L-methionine binding. Lys163 serves as a coordination point for GTP. Met197 contacts S-adenosyl-L-methionine. 2 residues coordinate [4Fe-4S] cluster: Cys261 and Cys264. Residue 266 to 268 (RAR) participates in GTP binding. Cys278 provides a ligand contact to [4Fe-4S] cluster.

This sequence belongs to the radical SAM superfamily. MoaA family. Monomer and homodimer. [4Fe-4S] cluster is required as a cofactor.

It carries out the reaction GTP + AH2 + S-adenosyl-L-methionine = (8S)-3',8-cyclo-7,8-dihydroguanosine 5'-triphosphate + 5'-deoxyadenosine + L-methionine + A + H(+). Its pathway is cofactor biosynthesis; molybdopterin biosynthesis. Catalyzes the cyclization of GTP to (8S)-3',8-cyclo-7,8-dihydroguanosine 5'-triphosphate. This Staphylococcus aureus (strain bovine RF122 / ET3-1) protein is GTP 3',8-cyclase.